Reading from the N-terminus, the 394-residue chain is Elongation factor Tu (394 aa).

One can recognise a tr-type G domain in the interval 10 to 204 (KPHVNVGTIG…ALDRYIPTPE (195 aa)). A G1 region spans residues 19 to 26 (GHVDHGKT). GTP is bound at residue 19–26 (GHVDHGKT). T26 serves as a coordination point for Mg(2+). Positions 60–64 (GITIN) are G2. The segment at 81-84 (DCPG) is G3. GTP contacts are provided by residues 81-85 (DCPGH) and 136-139 (NKCD). Positions 136–139 (NKCD) are G4. The interval 174 to 176 (SAL) is G5.

This sequence belongs to the TRAFAC class translation factor GTPase superfamily. Classic translation factor GTPase family. EF-Tu/EF-1A subfamily. Monomer.

It is found in the cytoplasm. The enzyme catalyses GTP + H2O = GDP + phosphate + H(+). GTP hydrolase that promotes the GTP-dependent binding of aminoacyl-tRNA to the A-site of ribosomes during protein biosynthesis. This chain is Elongation factor Tu, found in Neisseria gonorrhoeae.